A 537-amino-acid polypeptide reads, in one-letter code: MDCLIANINENDQFLERLKESESLLNTFYQYDAMSPESFEQALNAPNNGREQELASVISNYMSDLELTEAQQINIDKLKKGAKVVIGGQQAGLFGGPLYTFHKILSIVNLSRQLNEEYNKEVVPVFWIAGEDHDFDEVNHTYVFNTEKAKLHKVKYHTMTPPESNVSRFIPDKDKMLEALDDFLVQIPETAHTNHLRNEVQHIIKNYASWSDMFKALLHIVFKEYGVLLIDAQDPKLRHLEKPILKEMLKKHDEVDRAFRQRQAETVEAGLAEMIQTDTNVHLFLHEDDMRQLLTYEDGHYYTSKSQTAYTLDELLEIVENTPERFSNNVVTRPIMEEWLFNTVSFIGGPSEIKYWAELKAAFDVLDVTMPIVLPRMKITYITKRIEKLLKRYDINAEHVIADGIDNDKNKFIRAHASEQFLNELDQLEAQQKETYERLAAEVQGNEDNKNLVEKNNQIHQSQYDYLRKRYFINIERENAISMKHFRELNETLHPMGGLQERVWNALQFMNEFGTDMFSPSIYPPLRYTLKQIIIKP.

Residues 417-457 (ASEQFLNELDQLEAQQKETYERLAAEVQGNEDNKNLVEKNN) adopt a coiled-coil conformation.

It belongs to the BshC family.

In terms of biological role, involved in bacillithiol (BSH) biosynthesis. May catalyze the last step of the pathway, the addition of cysteine to glucosamine malate (GlcN-Mal) to generate BSH. The polypeptide is Putative cysteine ligase BshC (Staphylococcus carnosus (strain TM300)).